Consider the following 197-residue polypeptide: Nucleoid occlusion factor SlmA (197 aa).

The HTH tetR-type domain maps to 6-66 (NDRRTQILQA…GLIEFIEESL (61 aa)). Positions 29-48 (TTAALAKQVGVSEAALYRHF) form a DNA-binding region, H-T-H motif.

Belongs to the nucleoid occlusion factor SlmA family. As to quaternary structure, homodimer. Interacts with FtsZ.

It is found in the cytoplasm. Its subcellular location is the nucleoid. Its function is as follows. Required for nucleoid occlusion (NO) phenomenon, which prevents Z-ring formation and cell division over the nucleoid. Acts as a DNA-associated cell division inhibitor that binds simultaneously chromosomal DNA and FtsZ, and disrupts the assembly of FtsZ polymers. SlmA-DNA-binding sequences (SBS) are dispersed on non-Ter regions of the chromosome, preventing FtsZ polymerization at these regions. In Marinomonas sp. (strain MWYL1), this protein is Nucleoid occlusion factor SlmA.